A 944-amino-acid chain; its full sequence is DNA ligase 4 (944 aa).

ATP is bound by residues E280, K282, R287, E340, F382, E442, K447, K464, and K466. K282 functions as the N6-AMP-lysine intermediate in the catalytic mechanism. E340 contacts Mg(2+). Mg(2+) is bound at residue E442. BRCT domains lie at 681 to 780 and 836 to 941; these read PISN…PNYC and FPLF…DFPV.

Belongs to the ATP-dependent DNA ligase family. In terms of assembly, component of the DNA ligase IV complex, composed of DNL4, LIF1 and NEJ1. Interacts (via BRCT domain) with LIF1. Interacts with NEJ1. Interacts with POL4 in the DNL4-LIF1 complex. The cofactor is Mg(2+).

The protein resides in the nucleus. It carries out the reaction ATP + (deoxyribonucleotide)n-3'-hydroxyl + 5'-phospho-(deoxyribonucleotide)m = (deoxyribonucleotide)n+m + AMP + diphosphate.. In terms of biological role, DNA ligase involved in DNA non-homologous end joining (NHEJ); required for double-strand break (DSB) repair. This is DNA ligase 4 (DNL4) from Saccharomyces cerevisiae (strain ATCC 204508 / S288c) (Baker's yeast).